The sequence spans 4731 residues: Dynein axonemal heavy chain 8 (4731 aa).

Residues 1 to 145 (MESEEGNAEP…SKFRRSMTGI (145 aa)) form a disordered region. The span at 9–55 (EPPPPSEEAPPPVVEEAPPPLPPEDTAPPPPEEQAPPPEGDAAPPPT) shows a compositional bias: pro residues. A compositionally biased stretch (basic and acidic residues) spans 66-75 (EAPHPEDPKL). Residues 94–106 (SDEEVTLPEDEES) show a composition bias toward acidic residues. A compositionally biased stretch (polar residues) spans 122-133 (SVLSDGISQSSR). A coiled-coil region spans residues 145 to 169 (IPNLQETLKEKQARFREARENRKMK). Ser917 carries the post-translational modification Phosphoserine. The disordered stretch occupies residues 1177 to 1201 (FQNNSRGSDQPPASGKPLKKEERSF). Residues 1543–1567 (DVDIEKINAELQEFQNRCRKLPRAL) are a coiled coil. AAA stretches follow at residues 2049 to 2271 (YQNE…VLRT), 2331 to 2550 (SAVD…KLSL), 2657 to 2910 (FYPT…IWQG), and 3021 to 3275 (QFNE…YRRR). ATP contacts are provided by residues 2087 to 2094 (GPAGTGKT) and 2369 to 2376 (GPSGSGKT). The interval 3290 to 3587 (YKSIYTDKVK…MDLLNDADMC (298 aa)) is stalk. Coiled coils occupy residues 3313–3405 (DKLM…ALNT), 3531–3583 (LKAN…LLND), and 3836–3871 (RVIL…DNLL). 2 AAA regions span residues 3673–3903 (LVDP…EVSE) and 4118–4332 (ARKY…FIQN).

Belongs to the dynein heavy chain family. As to quaternary structure, consists of at least two heavy chains and a number of intermediate and light chains. In terms of tissue distribution, isoform 1 and/or isoform 2 are expressed in spermatocytes and mature sperm (at protein level). Testis-specific. Accumulates exclusively in mid to late spermatocytes.

Its subcellular location is the cytoplasm. The protein localises to the cytoskeleton. It localises to the flagellum axoneme. In terms of biological role, force generating protein component of the outer dynein arms (ODAs) in the sperm flagellum. Produces force towards the minus ends of microtubules. Dynein has ATPase activity; the force-producing power stroke is thought to occur on release of ADP. Involved in sperm motility; implicated in sperm flagellar assembly. This is Dynein axonemal heavy chain 8 (Dnah8) from Mus musculus (Mouse).